Consider the following 92-residue polypeptide: Long neurotoxin 73 (92 aa).

The signal sequence occupies residues 1 to 21 (MKTLLLTLVVVTIVCLDLGDS). 5 cysteine pairs are disulfide-bonded: cysteine 24–cysteine 41, cysteine 34–cysteine 62, cysteine 47–cysteine 51, cysteine 66–cysteine 77, and cysteine 78–cysteine 83.

This sequence belongs to the three-finger toxin family. Long-chain subfamily. Type II alpha-neurotoxin sub-subfamily. As to expression, expressed by the venom gland.

The protein localises to the secreted. Its function is as follows. Binds with high affinity to muscular (alpha-1/CHRNA1) and neuronal (alpha-7/CHRNA7) nicotinic acetylcholine receptor (nAChR) and inhibits acetylcholine from binding to the receptor, thereby impairing neuromuscular and neuronal transmission. This Drysdalia coronoides (White-lipped snake) protein is Long neurotoxin 73.